The sequence spans 130 residues: Small ribosomal subunit protein uS11 (130 aa).

The protein belongs to the universal ribosomal protein uS11 family. Part of the 30S ribosomal subunit. Interacts with proteins S7 and S18. Binds to IF-3.

Its function is as follows. Located on the platform of the 30S subunit, it bridges several disparate RNA helices of the 16S rRNA. Forms part of the Shine-Dalgarno cleft in the 70S ribosome. The chain is Small ribosomal subunit protein uS11 from Psychrobacter sp. (strain PRwf-1).